A 162-amino-acid chain; its full sequence is uncharacterized protein (162 aa).

3 Pentapeptide repeat domains span residues 33–72 (ASLI…NMTE), 73–112 (VCLI…DLRK), and 113–152 (ANLS…YISD).

This is an uncharacterized protein from Synechocystis sp. (strain ATCC 27184 / PCC 6803 / Kazusa).